The primary structure comprises 854 residues: Glucans biosynthesis glucosyltransferase H (854 aa).

A run of 7 helical transmembrane segments spans residues Ile-155 to Leu-175, Ile-209 to Met-229, Val-528 to Leu-548, Ile-583 to Leu-603, Phe-619 to Phe-639, Phe-671 to Leu-691, and Phe-695 to Tyr-715.

This sequence belongs to the glycosyltransferase 2 family. OpgH subfamily.

The protein localises to the cell inner membrane. Its pathway is glycan metabolism; osmoregulated periplasmic glucan (OPG) biosynthesis. Its function is as follows. Involved in the biosynthesis of osmoregulated periplasmic glucans (OPGs). In Pectobacterium carotovorum subsp. carotovorum (strain PC1), this protein is Glucans biosynthesis glucosyltransferase H.